The primary structure comprises 216 residues: Imidazole glycerol phosphate synthase subunit HisH (216 aa).

The 215-residue stretch at 2-216 folds into the Glutamine amidotransferase type-1 domain; the sequence is SIAIIDYGSG…LISNFLRWKP (215 aa). C88 serves as the catalytic Nucleophile. Active-site residues include H196 and E198.

As to quaternary structure, heterodimer of HisH and HisF.

Its subcellular location is the cytoplasm. The catalysed reaction is 5-[(5-phospho-1-deoxy-D-ribulos-1-ylimino)methylamino]-1-(5-phospho-beta-D-ribosyl)imidazole-4-carboxamide + L-glutamine = D-erythro-1-(imidazol-4-yl)glycerol 3-phosphate + 5-amino-1-(5-phospho-beta-D-ribosyl)imidazole-4-carboxamide + L-glutamate + H(+). The enzyme catalyses L-glutamine + H2O = L-glutamate + NH4(+). The protein operates within amino-acid biosynthesis; L-histidine biosynthesis; L-histidine from 5-phospho-alpha-D-ribose 1-diphosphate: step 5/9. Functionally, IGPS catalyzes the conversion of PRFAR and glutamine to IGP, AICAR and glutamate. The HisH subunit catalyzes the hydrolysis of glutamine to glutamate and ammonia as part of the synthesis of IGP and AICAR. The resulting ammonia molecule is channeled to the active site of HisF. The chain is Imidazole glycerol phosphate synthase subunit HisH from Bradyrhizobium diazoefficiens (strain JCM 10833 / BCRC 13528 / IAM 13628 / NBRC 14792 / USDA 110).